The chain runs to 340 residues: uncharacterized protein (340 aa).

The disordered stretch occupies residues 284–340; that stretch reads DHSTPTNYQQETPASQQQLDQENEPIKPSKKSNSSSLPRGTTQPKSNSINRVSKLID. Polar residues-rich tracts occupy residues 286–303 and 320–334; these read STPT…QQLD and LPRG…SINR.

This is an uncharacterized protein from Mycoplasma genitalium (strain ATCC 33530 / DSM 19775 / NCTC 10195 / G37) (Mycoplasmoides genitalium).